The primary structure comprises 306 residues: Homoserine O-succinyltransferase (306 aa).

The Acyl-thioester intermediate role is filled by cysteine 142. Positions 163 and 192 each coordinate substrate. Catalysis depends on histidine 233, which acts as the Proton acceptor. Glutamate 235 is a catalytic residue. Arginine 247 serves as a coordination point for substrate.

Belongs to the MetA family.

It is found in the cytoplasm. The enzyme catalyses L-homoserine + succinyl-CoA = O-succinyl-L-homoserine + CoA. The protein operates within amino-acid biosynthesis; L-methionine biosynthesis via de novo pathway; O-succinyl-L-homoserine from L-homoserine: step 1/1. In terms of biological role, transfers a succinyl group from succinyl-CoA to L-homoserine, forming succinyl-L-homoserine. This chain is Homoserine O-succinyltransferase, found in Pelagibacterium halotolerans (strain DSM 22347 / JCM 15775 / CGMCC 1.7692 / B2).